The chain runs to 353 residues: ATPase GET3 (353 aa).

26-33 (KGGVGKTT) lines the ATP pocket. The active site involves Asp-57. Positions 244 and 271 each coordinate ATP. Cys-284 and Cys-287 together coordinate Zn(2+).

Belongs to the arsA ATPase family. Homodimer. Component of the Golgi to ER traffic (GET) complex, which is composed of GET1, GET2 and GET3. Within the complex, GET1 and GET2 form a heterotetramer which is stabilized by phosphatidylinositol binding and which binds to the GET3 homodimer. Interacts with the chloride channel protein GEF1.

It is found in the cytoplasm. It localises to the endoplasmic reticulum. Its subcellular location is the golgi apparatus. Functionally, ATPase required for the post-translational delivery of tail-anchored (TA) proteins to the endoplasmic reticulum. Recognizes and selectively binds the transmembrane domain of TA proteins in the cytosol. This complex then targets to the endoplasmic reticulum by membrane-bound receptors GET1 and GET2, where the tail-anchored protein is released for insertion. This process is regulated by ATP binding and hydrolysis. ATP binding drives the homodimer towards the closed dimer state, facilitating recognition of newly synthesized TA membrane proteins. ATP hydrolysis is required for insertion. Subsequently, the homodimer reverts towards the open dimer state, lowering its affinity for the GET1-GET2 receptor, and returning it to the cytosol to initiate a new round of targeting. Cooperates with the HDEL receptor ERD2 to mediate the ATP-dependent retrieval of resident ER proteins that contain a C-terminal H-D-E-L retention signal from the Golgi to the ER. Involved in low-level resistance to the oxyanions arsenite and arsenate, and in heat tolerance. The polypeptide is ATPase GET3 (Zygosaccharomyces rouxii (strain ATCC 2623 / CBS 732 / NBRC 1130 / NCYC 568 / NRRL Y-229)).